The primary structure comprises 59 residues: Large ribosomal subunit protein bL32 (59 aa).

The protein belongs to the bacterial ribosomal protein bL32 family.

This is Large ribosomal subunit protein bL32 from Synechococcus sp. (strain JA-2-3B'a(2-13)) (Cyanobacteria bacterium Yellowstone B-Prime).